Consider the following 354-residue polypeptide: Uroporphyrinogen decarboxylase (354 aa).

Substrate contacts are provided by residues 27–31 (RQAGR), Asp77, Tyr154, Thr209, and His327.

This sequence belongs to the uroporphyrinogen decarboxylase family. As to quaternary structure, homodimer.

It localises to the cytoplasm. The enzyme catalyses uroporphyrinogen III + 4 H(+) = coproporphyrinogen III + 4 CO2. Its pathway is porphyrin-containing compound metabolism; protoporphyrin-IX biosynthesis; coproporphyrinogen-III from 5-aminolevulinate: step 4/4. Its function is as follows. Catalyzes the decarboxylation of four acetate groups of uroporphyrinogen-III to yield coproporphyrinogen-III. The chain is Uroporphyrinogen decarboxylase from Citrobacter koseri (strain ATCC BAA-895 / CDC 4225-83 / SGSC4696).